We begin with the raw amino-acid sequence, 387 residues long: Phosphoglycerate kinase (387 aa).

Substrate is bound by residues D21–N23, R36, H59–R62, R113, and R146. ATP contacts are provided by residues K197, E314, and G340–T343.

This sequence belongs to the phosphoglycerate kinase family. In terms of assembly, monomer.

It localises to the cytoplasm. It carries out the reaction (2R)-3-phosphoglycerate + ATP = (2R)-3-phospho-glyceroyl phosphate + ADP. It participates in carbohydrate degradation; glycolysis; pyruvate from D-glyceraldehyde 3-phosphate: step 2/5. The chain is Phosphoglycerate kinase from Pseudomonas entomophila (strain L48).